The primary structure comprises 435 residues: Protein SUPPRESSOR OF K(+) TRANSPORT GROWTH DEFECT 1 (435 aa).

Positions 7–72 (EQAIEYVKQA…LRRAEEIRAV (66 aa)) constitute an MIT domain. Residues 73-113 (LDEGGSGPGSNGDAAVATRPKTKPKDGEGGGKDGEDPEQSK) form a disordered region. Basic and acidic residues predominate over residues 95 to 113 (KPKDGEGGGKDGEDPEQSK). 172–179 (GPPGTGKS) contributes to the ATP binding site.

This sequence belongs to the AAA ATPase family. In terms of assembly, monomer or homodimer (in nucleotide-free form). Decamer, dodecamer or tetradecamer of two stacked respective homooligomeric rings (when bound to ATP); the dodecameric form seems to be predominant. Interacts with members of the ESCRT-III subcomplex such as LIP5, VPS60-1, VPS2.1, VPS20.1, VPS20.2, VPS24-1, VPS32.1, VPS32.2, CHMP1A and VPS24. Binds to PROS/At4g24370. As to expression, mostly expressed in leaves, to a lower extent in seeds, and barely in roots and flowers (at protein level). Particularly expressed in trichomes.

The protein localises to the cytoplasm. The protein resides in the nucleus. It is found in the endosome. Its subcellular location is the multivesicular body membrane. It localises to the prevacuolar compartment membrane. It catalyses the reaction ATP + H2O = ADP + phosphate + H(+). Activated by LIP5 and PROS. Involved in the transport of biosynthetic membrane proteins from the prevacuolar/endosomal compartment to the vacuole. Required for multivesicular body (MVB) protein sorting. Catalyzes the ATP-dependent dissociation of class E VPS proteins from endosomal membranes, such as the disassembly of the ESCRT-III complex. May also regulate cell cycle. Required during seed development for the formation of mucilage in seed coat and testa. Involved in the maintenance of Na(+)/K(+) homeostasis under salt stress. Required for cell expansion. The sequence is that of Protein SUPPRESSOR OF K(+) TRANSPORT GROWTH DEFECT 1 from Arabidopsis thaliana (Mouse-ear cress).